Here is a 424-residue protein sequence, read N- to C-terminus: Otefin (424 aa).

In terms of domain architecture, LEM spans 1 to 30 (MADVDDFDSLSNAELRAKMLAQGLPNIPVT). Positions 1–50 (MADVDDFDSLSNAELRAKMLAQGLPNIPVTDSSRKVLVKRLRASIGGQAS) are required for binding to Med and germline stem cell maintenance. Residues 42–186 (RASIGGQASP…SSKRADREEN (145 aa)) are disordered. 3 positions are modified to phosphoserine: Ser-44, Ser-50, and Ser-54. Thr-63 is modified (phosphothreonine). Low complexity predominate over residues 65-80 (APAPGAPSAPAAASTP). The short motif at 92-99 (ATKARRTI) is the Nuclear localization signal element. Positions 103-133 (EAKEPVRRLPEEAIRRRPDEADRLRSEEPVA) are enriched in basic and acidic residues. Residue Ser-152 is modified to Phosphoserine. Over residues 157–170 (SERKVVEPLRKPET) the composition is skewed to basic and acidic residues. 2 positions are modified to phosphoserine: Ser-192 and Ser-198. The interval 259 to 278 (PSVPSARAQTTSSTRSYDYA) is disordered. The segment covering 262–274 (PSARAQTTSSTRS) has biased composition (low complexity). Residues 271–400 (STRSYDYASN…NRWLNSLEQK (130 aa)) form a required for binding to Med region. Residue Ser-321 is modified to Phosphoserine. Thr-324 bears the Phosphothreonine mark. Ser-326 carries the post-translational modification Phosphoserine. Thr-358 carries the post-translational modification Phosphothreonine. Ser-378 and Ser-385 each carry phosphoserine. An essential for nuclear membrane localization and germline stem cell maintenance region spans residues 400 to 424 (KYHIKSKLFIVLLVLLLIGVYYIFY). An essential for nuclear membrane localization region spans residues 406–424 (KLFIVLLVLLLIGVYYIFY).

As to quaternary structure, interacts with Med. Interacts with Lam. Interacts with aurA, alphaTub84B, gammaTub23C and gammaTub37C. Interacts with Nemp. In terms of processing, phosphorylation at Thr-63 by aurA may be required for exit from mitosis. May be phosphorylated by Cdk1 and Pka-C1. As to expression, expressed in all cell types of the germarium and testis. Expressed in nurse cells, follicle cells and oocytes.

Its subcellular location is the nucleus inner membrane. It is found in the nucleus. It localises to the nucleoplasm. The protein localises to the cytoplasm. The protein resides in the chromosome. Its subcellular location is the cytoskeleton. It is found in the spindle pole. It localises to the microtubule organizing center. The protein localises to the centrosome. Its function is as follows. Inner nuclear membrane protein. Involved in the attachment of membrane vesicles to chromatin during nuclear assembly, and is probably required for centrosome maturation and cell cycle progression during mitosis. Essential for differentiation of certain tissues and the maintenance of progenitor cell populations. Required for the differentiation and maintenance of male and female germline stem cells (GSCs), as well as the maintenance of somatic cells in the GSC niche. This role is likely to be independent of the BMP (Dpp) pathway that negatively regulates bam transcription during GSC differentiation. During development, plays essential and redundant functions with the other LEM domain proteins; bocks and MAN1. Also has a redundant but important role with bocks during larval development. The polypeptide is Otefin (Drosophila melanogaster (Fruit fly)).